Here is a 633-residue protein sequence, read N- to C-terminus: Putative oligopeptide transporter HI_0561 (633 aa).

15 helical membrane-spanning segments follow: residues 8-28 (GVTF…LKFF), 45-65 (SAGT…MGYW), 70-90 (FWQT…FTIP), 128-148 (IAYG…LRVM), 180-200 (IGIV…GVAV), 230-250 (IGVG…MKPM), 281-301 (MIYI…HFIA), 311-331 (ILLV…VAAA), 345-365 (PISG…VSIG), 379-399 (FLTA…CISN), 420-440 (VALI…LEIL), 483-503 (WTYI…DAFL), 515-535 (VIAV…VIVG), 564-584 (LFSA…AFII), and 604-624 (WDTI…VIFA).

The protein belongs to the oligopeptide OPT transporter family.

The protein resides in the cell membrane. This Haemophilus influenzae (strain ATCC 51907 / DSM 11121 / KW20 / Rd) protein is Putative oligopeptide transporter HI_0561.